The following is a 544-amino-acid chain: MFGGQQPILVLSQNTKRESGRKVQLENIQAGKAIADVIRTCLGPQAMLKMLMDPMGGIVMTNDGNAILREITVQHPAAKSMIEIARTQDEEVGDGTTSVIVLAGEMLAAAEPFLQQQIHPTVIIRAYREALEDIVGHLQSQLSIQLDVKDKAKMADVVKACVGTKFIGKWSDLAVKIALDAVETVTLSENGRLEVDIKRYAKVEKIPGGAIEESCVLKGVMINKDVTHPKMRRLIENPRIVLLDCSLEYKKGESQTNVEIIGEQDFTRMLQIEEEFVQRICADIIAVKPDLVFTEKGVSDLAQHYLLKAGITAIRRLRKTDNLRIARACGATIVNRTEELTEKDVGTGAGLFEVKKIGDEYFTFVTECKEPKACTILLRGASKDILNETERNLQDALHVARNLVLEPRLVAGGGAVEMAASQLLTRKQVKGPYTAVAHALEIIPRTLAQNCGANTIRALTALRAKHASHTGDGVCAWGIDGESGEIVDMNVKNIWEPLAVKLQTYKTAVETAILLLRIDDIVSGSKKRGGNEPTNPAAMAQGQE.

A disulfide bridge links Cys-368 with Cys-374. The disordered stretch occupies residues 525 to 544 (SKKRGGNEPTNPAAMAQGQE).

Belongs to the TCP-1 chaperonin family. Heterooligomeric complex of about 850 to 900 kDa that forms two stacked rings, 12 to 16 nm in diameter.

The protein localises to the cytoplasm. Its function is as follows. Molecular chaperone; assists the folding of proteins upon ATP hydrolysis. Known to play a role, in vitro, in the folding of actin and tubulin. The chain is T-complex protein 1 subunit gamma from Drosophila melanogaster (Fruit fly).